Here is a 357-residue protein sequence, read N- to C-terminus: Transcription factor HHO1 (357 aa).

Disordered stretches follow at residues 94 to 117 (TSIEEEVDDKDDDDEEHQSHETDI) and 171 to 198 (NNNIKSPVTTSDGGSGGGGGRRGQRKNR). Acidic residues predominate over residues 96 to 109 (IEEEVDDKDDDDEE). Over residues 171 to 182 (NNNIKSPVTTSD) the composition is skewed to polar residues. The HTH myb-type domain occupies 193 to 253 (GQRKNRRCWS…HLQKYRLHAR (61 aa)). The H-T-H motif DNA-binding region spans 224–249 (PKQIRDIMKVDGLTNDEVKSHLQKYR).

Its subcellular location is the nucleus. Probable factor involved in nitrate and phosphate signaling in roots. Integrates nitrate and phosphate starvation responses and adaptation of root architecture, depending on nutrient availabilities. Acts downstream of the nitrate sensor and transporter NPF6.3/NRT1.1. Represses primary root development in response to phosphate deficiency conditions, only when nitrate is present. This Arabidopsis thaliana (Mouse-ear cress) protein is Transcription factor HHO1.